We begin with the raw amino-acid sequence, 372 residues long: Serine proteinase inhibitor 1 (372 aa).

Belongs to the serpin family. Poxviruses subfamily.

Its subcellular location is the host cytoplasm. Plays a role in mediating viral host range. May act to inhibit a caspase independent form of apoptosis to allow efficient virus replication in infected cells. This Homo sapiens (Human) protein is Serine proteinase inhibitor 1 (OPG208).